Here is an 862-residue protein sequence, read N- to C-terminus: Dipeptidyl peptidase 9 (862 aa).

Catalysis depends on charge relay system residues S729, D807, and H839. Residue S729 participates in Val-boroPro binding.

This sequence belongs to the peptidase S9B family. DPPIV subfamily. As to quaternary structure, homodimer. Forms a ternary complex with NLRP1, composed of a DPP9 homodimer, one full-length NLRP1 protein, and one cleaved C-terminus of NLRP1 (NACHT, LRR and PYD domains-containing protein 1, C-terminus). Forms a ternary complex with CARD8, composed of a DPP9 homodimer, one full-length NLRP1 protein, and one cleaved C-terminus of CARD8 (Caspase recruitment domain-containing protein 8, C-terminus). In the ternary complex, only one subunit of the DPP9 homodimer is bound to NLRP1 or CARD8. Detected in kidney, skin, brain, thymus and liver (at protein level).

It localises to the cytoplasm. It is found in the cytosol. It catalyses the reaction Release of an N-terminal dipeptide, Xaa-Yaa-|-Zaa-, from a polypeptide, preferentially when Yaa is Pro, provided Zaa is neither Pro nor hydroxyproline.. Inhibited by the serine proteinase inhibitor 4-(2-aminoethyl)benzenesulphonyl fluoride (AEBSF), and by di-isopropylfluorophosphate. Inhibited by Val-boroPro (Talabostat, PT-100), a non-selective inhibitor, which triggers pyroptosis in monocytes and macrophages. Val-boroPro inhibits activity by binding to the active site, mimicking a substrate-bound state, thereby displacing the C-terminal fragment of NLRP1, leading to activation of the NLRP1 inflammasome. In contrast, Val-boroPro does not directly displaces CARD8: it acts by promoting degradation of the N-terminal part of CARD8, leading to indirect disruption of the ternary complex. In terms of biological role, dipeptidyl peptidase that cleaves off N-terminal dipeptides from proteins having a Pro or Ala residue at position 2. Acts as a key inhibitor of caspase-1-dependent monocyte and macrophage pyroptosis in resting cells by preventing activation of NLRP1 and CARD8. Sequesters the cleaved C-terminal part of NLRP1 and CARD8, which respectively constitute the active part of the NLRP1 and CARD8 inflammasomes, in a ternary complex, thereby preventing their oligomerization and activation. The dipeptidyl peptidase activity is required to suppress NLRP1 and CARD8; however, neither NLRP1 nor CARD8 are bona fide substrates of DPP9, suggesting the existence of substrate(s) required for NLRP1 and CARD8 inhibition. The chain is Dipeptidyl peptidase 9 from Mus musculus (Mouse).